Consider the following 312-residue polypeptide: Epoxyqueuosine reductase (312 aa).

The active-site Proton donor is the aspartate 132. Residues glutamate 174 to isoleucine 206 form the 4Fe-4S ferredoxin-type 1 domain. Residues cysteine 186, cysteine 189, cysteine 192, cysteine 196, cysteine 212, cysteine 240, cysteine 243, and cysteine 247 each contribute to the [4Fe-4S] cluster site. The 32-residue stretch at proline 226–threonine 257 folds into the 4Fe-4S ferredoxin-type 2 domain.

This sequence belongs to the QueG family. In terms of assembly, monomer. Cob(II)alamin serves as cofactor. It depends on [4Fe-4S] cluster as a cofactor.

The protein resides in the cytoplasm. It catalyses the reaction epoxyqueuosine(34) in tRNA + AH2 = queuosine(34) in tRNA + A + H2O. It functions in the pathway tRNA modification; tRNA-queuosine biosynthesis. Functionally, catalyzes the conversion of epoxyqueuosine (oQ) to queuosine (Q), which is a hypermodified base found in the wobble positions of tRNA(Asp), tRNA(Asn), tRNA(His) and tRNA(Tyr). The protein is Epoxyqueuosine reductase of Prochlorococcus marinus (strain NATL2A).